Consider the following 361-residue polypeptide: Biotin synthase (361 aa).

In terms of domain architecture, Radical SAM core spans 63–290 (NTVQLSTLLS…RAMVRLSAGR (228 aa)). [4Fe-4S] cluster-binding residues include cysteine 78, cysteine 82, and cysteine 85. Residues cysteine 122, cysteine 153, cysteine 213, and arginine 285 each coordinate [2Fe-2S] cluster.

This sequence belongs to the radical SAM superfamily. Biotin synthase family. Homodimer. [4Fe-4S] cluster is required as a cofactor. The cofactor is [2Fe-2S] cluster.

The enzyme catalyses (4R,5S)-dethiobiotin + (sulfur carrier)-SH + 2 reduced [2Fe-2S]-[ferredoxin] + 2 S-adenosyl-L-methionine = (sulfur carrier)-H + biotin + 2 5'-deoxyadenosine + 2 L-methionine + 2 oxidized [2Fe-2S]-[ferredoxin]. It functions in the pathway cofactor biosynthesis; biotin biosynthesis; biotin from 7,8-diaminononanoate: step 2/2. Its function is as follows. Catalyzes the conversion of dethiobiotin (DTB) to biotin by the insertion of a sulfur atom into dethiobiotin via a radical-based mechanism. The chain is Biotin synthase from Paraburkholderia phytofirmans (strain DSM 17436 / LMG 22146 / PsJN) (Burkholderia phytofirmans).